The following is a 261-amino-acid chain: Homeobox-leucine zipper protein HOX24 (261 aa).

Disordered stretches follow at residues 42–67 (AAAA…RKRR) and 160–188 (KLNE…NSVM). The segment covering 46–61 (GRGGGDGDGGGGGGGG) has biased composition (gly residues). The homeobox DNA-binding region spans 61 to 121 (GGERKRRFTE…NKRARWRSKQ (61 aa)). Residues 120–164 (KQIEHDYAALRAQYDALHARVESLRQEKLALADQVDELRGKLNER) form a leucine-zipper region.

This sequence belongs to the HD-ZIP homeobox family. Class I subfamily. Expressed in roots and panicles.

Its subcellular location is the nucleus. In terms of biological role, probable transcription factor. This Oryza sativa subsp. japonica (Rice) protein is Homeobox-leucine zipper protein HOX24 (HOX24).